The primary structure comprises 418 residues: Tyrosine--tRNA ligase (418 aa).

Residue tyrosine 39 participates in L-tyrosine binding. Positions 44 to 53 match the 'HIGH' region motif; the sequence is CTADSLHVGS. L-tyrosine-binding residues include tyrosine 176 and glutamine 180. The 'KMSKS' region motif lies at 236–240; sequence KMGKT. Residue lysine 239 participates in ATP binding. Positions 350 to 416 constitute an S4 RNA-binding domain; that stretch reads LPLAEMMRAT…KKRHALIRVL (67 aa).

The protein belongs to the class-I aminoacyl-tRNA synthetase family. TyrS type 1 subfamily. As to quaternary structure, homodimer.

It localises to the cytoplasm. The enzyme catalyses tRNA(Tyr) + L-tyrosine + ATP = L-tyrosyl-tRNA(Tyr) + AMP + diphosphate + H(+). Its function is as follows. Catalyzes the attachment of tyrosine to tRNA(Tyr) in a two-step reaction: tyrosine is first activated by ATP to form Tyr-AMP and then transferred to the acceptor end of tRNA(Tyr). In Rhodospirillum rubrum (strain ATCC 11170 / ATH 1.1.1 / DSM 467 / LMG 4362 / NCIMB 8255 / S1), this protein is Tyrosine--tRNA ligase.